The primary structure comprises 236 residues: Peroxisomal membrane protein PMP27 (236 aa).

Belongs to the peroxin-11 family. Homooligomer. Interacts with PEX34.

It is found in the peroxisome membrane. Its function is as follows. Involved in peroxisomal proliferation. Promotes peroxisome division and biogenesis. The polypeptide is Peroxisomal membrane protein PMP27 (PEX11) (Saccharomyces cerevisiae (strain ATCC 204508 / S288c) (Baker's yeast)).